The primary structure comprises 254 residues: uncharacterized protein (254 aa).

This is an uncharacterized protein from Acidianus filamentous virus 2 (isolate Italy/Pozzuoli) (AFV-2).